A 1036-amino-acid polypeptide reads, in one-letter code: Ephrin type-A receptor 6 (1036 aa).

The N-terminal stretch at 1–22 (MGGCEVREFLLQFGFFLPLLTA) is a signal peptide. The Extracellular portion of the chain corresponds to 23–550 (WPGDCSHVSN…MAAEQGQILV (528 aa)). The region spanning 34-212 (QVVLLDTTTV…FYKKCPFTVR (179 aa)) is the Eph LBD domain. Fibronectin type-III domains are found at residues 331–441 (PPSA…TDQD) and 442–537 (APSL…TGDE). N-linked (GlcNAc...) asparagine glycosylation is found at N343, N397, and N410. Residues 551–571 (IATAAVGGFTLLVILTLFFLI) form a helical membrane-spanning segment. At 572–1036 (TGRCQWYIKA…MHIQEKGFHV (465 aa)) the chain is on the cytoplasmic side. Residues Y606 and Y612 each carry the phosphotyrosine; by autocatalysis modification. One can recognise a Protein kinase domain in the interval 631–944 (IRIERVIGAG…RNPSALHTLV (314 aa)). ATP-binding positions include 637 to 645 (IGAGEFGEV) and K663. The Proton acceptor role is filled by D798. Residues Y831 and Y978 each carry the phosphotyrosine; by autocatalysis modification. The 65-residue stretch at 961-1025 (PLFVTVGDWL…VSSIQTLRLH (65 aa)) folds into the SAM domain. The short motif at 1034–1036 (FHV) is the PDZ-binding element.

This sequence belongs to the protein kinase superfamily. Tyr protein kinase family. Ephrin receptor subfamily. As to quaternary structure, heterotetramer upon binding of the ligand. The heterotetramer is composed of an ephrin dimer and a receptor dimer. Oligomerization is probably required to induce biological responses. Interacts (via SAM domain) with ANKS1A (via SAM domain). In terms of tissue distribution, expressed in brain and testis.

The protein resides in the membrane. It catalyses the reaction L-tyrosyl-[protein] + ATP = O-phospho-L-tyrosyl-[protein] + ADP + H(+). In terms of biological role, receptor tyrosine kinase which binds promiscuously GPI-anchored ephrin-A family ligands residing on adjacent cells, leading to contact-dependent bidirectional signaling into neighboring cells. The signaling pathway downstream of the receptor is referred to as forward signaling while the signaling pathway downstream of the ephrin ligand is referred to as reverse signaling. This Homo sapiens (Human) protein is Ephrin type-A receptor 6 (EPHA6).